The primary structure comprises 1710 residues: Phosphatidylinositol 4-phosphate 5-kinase (1710 aa).

In terms of domain architecture, EF-hand spans 68–98 (YKSIFKAFDLNNDNYLDFYEFCVAINIMLKG). Residues aspartate 76, asparagine 78, aspartate 80, tyrosine 82, and glutamate 87 each coordinate Ca(2+). 3 disordered regions span residues 139–255 (NNMN…DPIN), 427–479 (KQKK…IKSV), and 895–993 (GEGH…HNNN). Residues 140–235 (NMNGDNINGD…HNNNSHNNNN (96 aa)) show a composition bias toward low complexity. Over residues 236–248 (KAENSLGQPLNEK) the composition is skewed to polar residues. The span at 427–444 (KQKKKKKKKKKKKKKKEK) shows a compositional bias: basic residues. Low complexity predominate over residues 456 to 468 (SSSMENKSQNKSQ). The span at 902–973 (EEEEKNDDEE…DDNDDNDDND (72 aa)) shows a compositional bias: acidic residues. Residues 974–987 (EKSNIKIENKKDVP) show a composition bias toward basic and acidic residues. One can recognise a PIPK domain in the interval 1334–1709 (QKKTFHRILA…RFVTFIENHM (376 aa)).

It catalyses the reaction a 1,2-diacyl-sn-glycero-3-phospho-(1D-myo-inositol 4-phosphate) + ATP = a 1,2-diacyl-sn-glycero-3-phospho-(1D-myo-inositol-4,5-bisphosphate) + ADP + H(+). With respect to regulation, catalytic activity is increase by myristoylated ARF1. Phosphatidic acid has no effect on catalytic activity. In terms of biological role, catalyzes the phosphorylation of phosphatidylinositol 4-phosphate (PtdIns(4)P/PI4P) to form phosphatidylinositol 4,5-bisphosphate (PtdIns(4,5)P2/PIP2), a lipid second messenger that regulates several cellular processes. In Plasmodium falciparum (isolate 3D7), this protein is Phosphatidylinositol 4-phosphate 5-kinase.